The following is a 501-amino-acid chain: Phenylalanine--tRNA ligase alpha subunit (501 aa).

Positions 340 and 423 each coordinate L-phenylalanine. Residue Glu425 participates in Mg(2+) binding. L-phenylalanine is bound at residue Phe448.

It belongs to the class-II aminoacyl-tRNA synthetase family. Phe-tRNA synthetase alpha subunit type 2 subfamily. Tetramer of two alpha and two beta subunits. It depends on Mg(2+) as a cofactor.

The protein localises to the cytoplasm. It catalyses the reaction tRNA(Phe) + L-phenylalanine + ATP = L-phenylalanyl-tRNA(Phe) + AMP + diphosphate + H(+). This chain is Phenylalanine--tRNA ligase alpha subunit, found in Methanococcus maripaludis (strain C7 / ATCC BAA-1331).